The sequence spans 297 residues: UTP--glucose-1-phosphate uridylyltransferase YngB (297 aa).

Positions 1 to 27 (MRKKVRKAVIPAAGLGTRFLPATKAQP) are cleaved as a signal peptide.

Belongs to the UDPGP type 2 family. In terms of assembly, homodimer.

It carries out the reaction alpha-D-glucose 1-phosphate + UTP + H(+) = UDP-alpha-D-glucose + diphosphate. Its pathway is glycolipid metabolism; diglucosyl-diacylglycerol biosynthesis. Functionally, catalyzes the formation of UDP-glucose from glucose-1-phosphate and UTP. This is an intermediate step in the biosynthesis of diglucosyl-diacylglycerol (Glc2-DAG), i.e. the predominant glycolipid found in B.subtilis membrane, which is also used as a membrane anchor for lipoteichoic acid (LTA). YngB contributes to wall teichoic acid (WTA) glucosylation and glycolipid formation under anaerobic fermentative growth conditions. Might also enter other glycosylation pathways, leading to the decorating of other cell envelope components with glucose residues under anaerobic or other growth conditions. The protein is UTP--glucose-1-phosphate uridylyltransferase YngB (yngB) of Bacillus subtilis (strain 168).